Here is a 446-residue protein sequence, read N- to C-terminus: Methanogenesis regulatory protein FilR1 (446 aa).

Residues Asp-297 to Ala-416 enclose the Response regulatory domain. 4-aspartylphosphate is present on Asp-350.

Phosphorylated by FilI.

Functionally, member of the two-component regulatory system FilI/FilRs, which is involved in the regulation of methanogenesis. Regulates its own expression, expression of the filI-filR2 operon, and of genes involved in methanogenesis such as acs1, acs4 and mtrABC. Acts by binding to the promoters. This chain is Methanogenesis regulatory protein FilR1, found in Methanothrix harundinacea (strain 6Ac) (Methanosaeta harundinacea).